The chain runs to 364 residues: Flavonoid 3'-O-methyltransferase 3 (364 aa).

Asp232 contributes to the S-adenosyl-L-methionine binding site. The Proton acceptor role is filled by His270.

It belongs to the class I-like SAM-binding methyltransferase superfamily. Cation-independent O-methyltransferase family. Homodimer.

It catalyses the reaction quercetin + S-adenosyl-L-methionine = isorhamnetin + S-adenosyl-L-homocysteine + H(+). The catalysed reaction is luteolin + S-adenosyl-L-methionine = chrysoeriol + S-adenosyl-L-homocysteine + H(+). The enzyme catalyses a 3'-hydroxyflavone + S-adenosyl-L-methionine = a 3'-methoxyflavone + S-adenosyl-L-homocysteine + H(+). It carries out the reaction rhamnetin + S-adenosyl-L-methionine = rhamnacene + S-adenosyl-L-homocysteine + H(+). It catalyses the reaction 3',4',7,8-tetrahydroxyflavone + S-adenosyl-L-methionine = 4',7,8-trihydroxy-3'-methoxyflavone-7-olate + S-adenosyl-L-homocysteine + H(+). The catalysed reaction is taxifolin + S-adenosyl-L-methionine = taxifolin 3'-methyl ether + S-adenosyl-L-homocysteine + H(+). Its pathway is flavonoid metabolism. Its function is as follows. Flavonoid 3'-O-methyltransferase involved in the biosynthesis of polymethoxylated flavonoids natural products such as pebrellin, aroma compounds which contribute to the flavor of peppermint, and exhibit pharmacological activities such as anti-allergic, anti-oxidant, antibacterial, anti-proliferative, and anti-inflammatory effects. Catalyzes S-adenosylmethionine-dependent regioselective 3'-O-methylation of flavonoids; active on various hydroxylated flavonoid substrates, including quercetin, rhamnetin, luteolin (LUT), 7,8,3'4'-tetrahydroxy-flavone and taxifolin, and, with a lower efficiency, eupatorin and hesperetin. In Mentha piperita (Peppermint), this protein is Flavonoid 3'-O-methyltransferase 3.